Consider the following 353-residue polypeptide: Phosphoribosylformylglycinamidine cyclo-ligase (353 aa).

This sequence belongs to the AIR synthase family.

It localises to the cytoplasm. It carries out the reaction 2-formamido-N(1)-(5-O-phospho-beta-D-ribosyl)acetamidine + ATP = 5-amino-1-(5-phospho-beta-D-ribosyl)imidazole + ADP + phosphate + H(+). Its pathway is purine metabolism; IMP biosynthesis via de novo pathway; 5-amino-1-(5-phospho-D-ribosyl)imidazole from N(2)-formyl-N(1)-(5-phospho-D-ribosyl)glycinamide: step 2/2. The sequence is that of Phosphoribosylformylglycinamidine cyclo-ligase from Pseudomonas aeruginosa (strain ATCC 15692 / DSM 22644 / CIP 104116 / JCM 14847 / LMG 12228 / 1C / PRS 101 / PAO1).